We begin with the raw amino-acid sequence, 563 residues long: Arginine--tRNA ligase (563 aa).

The short motif at 121 to 131 is the 'HIGH' region element; sequence PNIAKPFSIGH.

Belongs to the class-I aminoacyl-tRNA synthetase family. As to quaternary structure, monomer.

It is found in the cytoplasm. The catalysed reaction is tRNA(Arg) + L-arginine + ATP = L-arginyl-tRNA(Arg) + AMP + diphosphate. This Streptococcus pneumoniae serotype 19F (strain G54) protein is Arginine--tRNA ligase.